Consider the following 465-residue polypeptide: Cysteine--tRNA ligase (465 aa).

Residue cysteine 29 coordinates Zn(2+). The short motif at 31-41 (PTVYNYIHIGN) is the 'HIGH' region element. Positions 209, 234, and 238 each coordinate Zn(2+). The 'KMSKS' region motif lies at 266–270 (KMSKS). Position 269 (lysine 269) interacts with ATP. Serine 270 is modified (phosphoserine).

This sequence belongs to the class-I aminoacyl-tRNA synthetase family. Monomer. Zn(2+) is required as a cofactor.

Its subcellular location is the cytoplasm. The catalysed reaction is tRNA(Cys) + L-cysteine + ATP = L-cysteinyl-tRNA(Cys) + AMP + diphosphate. This chain is Cysteine--tRNA ligase, found in Bacillus cereus (strain ATCC 10987 / NRS 248).